A 258-amino-acid chain; its full sequence is Small ribosomal subunit protein mS23 (258 aa).

Residues 230–239 (KKNSTKQSWA) are compositionally biased toward polar residues. Residues 230–258 (KKNSTKQSWAEATEEKEEQDSAEPEELKL) form a disordered region. The span at 241–258 (ATEEKEEQDSAEPEELKL) shows a compositional bias: acidic residues.

Belongs to the mitochondrion-specific ribosomal protein mS23 family. In terms of assembly, component of the mitochondrial small ribosomal subunit.

The protein localises to the mitochondrion. The protein is Small ribosomal subunit protein mS23 (RSM25) of Eremothecium gossypii (strain ATCC 10895 / CBS 109.51 / FGSC 9923 / NRRL Y-1056) (Yeast).